Here is a 226-residue protein sequence, read N- to C-terminus: Hand transcription factor 1 (226 aa).

Positions 1-15 (MVKSTTAGNNAVSSL) are enriched in polar residues. A disordered region spans residues 1–35 (MVKSTTAGNNAVSSLESTDSKKSRKEKSREKEHRR). A basic motif region spans residues 23-36 (SRKEKSREKEHRRA). The region spanning 23 to 77 (SRKEKSREKEHRRAQCINSAFEILQQHIPYLKSEERKSLPKIKTLRLAMQYIDHL) is the bHLH domain. The helix-loop-helix motif stretch occupies residues 37–77 (QCINSAFEILQQHIPYLKSEERKSLPKIKTLRLAMQYIDHL).

The protein localises to the nucleus. Functionally, probable transcription factor which regulates early embryonic myogenesis, in cooperation with transcription factors unc-120 and hlh-1. Involved in controlling the number and position of somatic gonadal precursor cells (SGPs) in the gonadal primordium, and embryonic body shape. The polypeptide is Hand transcription factor 1 (Caenorhabditis elegans).